The following is a 216-amino-acid chain: Adenylate kinase (216 aa).

Residue 10-15 (GAGKGT) coordinates ATP. Residues 30–59 (STGDMFRAAIKEGTPLGLQAKEYMDRGDLV) are NMP. AMP-binding positions include Thr-31, Arg-36, 57 to 59 (DLV), 85 to 88 (GFPR), and Gln-92. An LID region spans residues 126 to 163 (GRRICKNCGATYHLVFNPPAKSGVCDKCGGELYQRADD). Arg-127 serves as a coordination point for ATP. Cys-130 and Cys-133 together coordinate Zn(2+). 136 to 137 (TY) contacts ATP. Cys-150 and Cys-153 together coordinate Zn(2+). Residues Arg-160 and Arg-171 each coordinate AMP. Residue Gln-199 participates in ATP binding.

This sequence belongs to the adenylate kinase family. In terms of assembly, monomer.

It is found in the cytoplasm. The catalysed reaction is AMP + ATP = 2 ADP. It functions in the pathway purine metabolism; AMP biosynthesis via salvage pathway; AMP from ADP: step 1/1. Its function is as follows. Catalyzes the reversible transfer of the terminal phosphate group between ATP and AMP. Plays an important role in cellular energy homeostasis and in adenine nucleotide metabolism. This chain is Adenylate kinase, found in Geobacillus sp. (strain WCH70).